The following is a 338-amino-acid chain: Phenylalanine--tRNA ligase alpha subunit (338 aa).

Glu252 contributes to the Mg(2+) binding site.

Belongs to the class-II aminoacyl-tRNA synthetase family. Phe-tRNA synthetase alpha subunit type 1 subfamily. Tetramer of two alpha and two beta subunits. Mg(2+) is required as a cofactor.

Its subcellular location is the cytoplasm. It carries out the reaction tRNA(Phe) + L-phenylalanine + ATP = L-phenylalanyl-tRNA(Phe) + AMP + diphosphate + H(+). This is Phenylalanine--tRNA ligase alpha subunit from Pseudomonas entomophila (strain L48).